The primary structure comprises 853 residues: A-kinase anchor protein 3 (853 aa).

The segment at 124-137 is PKA-RII subunit binding domain; it reads VSFYANRLTNLVIA. Residues 188–240 are disordered; the sequence is RNAAPDKAPGSGDRVSGSSQSPPNLKYKSTLKIKESTKERQGPDDKPPSKKSF. Phosphoserine occurs at positions 205 and 208. A compositionally biased stretch (basic and acidic residues) spans 219–235; that stretch reads KIKESTKERQGPDDKPP. Position 403 is a phosphoserine (S403). A Phosphotyrosine modification is found at Y404. 2 positions are modified to phosphoserine: S635 and S636.

Belongs to the AKAP110 family. In terms of assembly, interacts with ROPN1 and ROPN1L. Interacts with QRICH2. Phosphorylated by STK33 during sperm flagella assembly. Phosphorylated on tyrosine residues. As to expression, testis specific; only expressed in spermatids.

It localises to the cytoplasmic vesicle. Its subcellular location is the secretory vesicle. The protein resides in the acrosome. The protein localises to the cell projection. It is found in the cilium. It localises to the flagellum. Its function is as follows. Structural component of sperm fibrous sheath. Required for the formation of the subcellular structure of the sperm flagellum, sperm motility and male fertility. This chain is A-kinase anchor protein 3, found in Homo sapiens (Human).